Reading from the N-terminus, the 262-residue chain is tRNA pseudouridine synthase A (262 aa).

Catalysis depends on D52, which acts as the Nucleophile. Y110 is a substrate binding site.

The protein belongs to the tRNA pseudouridine synthase TruA family. In terms of assembly, homodimer.

The catalysed reaction is uridine(38/39/40) in tRNA = pseudouridine(38/39/40) in tRNA. Functionally, formation of pseudouridine at positions 38, 39 and 40 in the anticodon stem and loop of transfer RNAs. The sequence is that of tRNA pseudouridine synthase A from Hydrogenovibrio crunogenus (strain DSM 25203 / XCL-2) (Thiomicrospira crunogena).